A 347-amino-acid polypeptide reads, in one-letter code: N-acetyl-gamma-glutamyl-phosphate reductase (347 aa).

C155 is a catalytic residue.

The protein belongs to the NAGSA dehydrogenase family. Type 1 subfamily.

It localises to the cytoplasm. It carries out the reaction N-acetyl-L-glutamate 5-semialdehyde + phosphate + NADP(+) = N-acetyl-L-glutamyl 5-phosphate + NADPH + H(+). Its pathway is amino-acid biosynthesis; L-arginine biosynthesis; N(2)-acetyl-L-ornithine from L-glutamate: step 3/4. In terms of biological role, catalyzes the NADPH-dependent reduction of N-acetyl-5-glutamyl phosphate to yield N-acetyl-L-glutamate 5-semialdehyde. In Akkermansia muciniphila (strain ATCC BAA-835 / DSM 22959 / JCM 33894 / BCRC 81048 / CCUG 64013 / CIP 107961 / Muc), this protein is N-acetyl-gamma-glutamyl-phosphate reductase.